Here is a 477-residue protein sequence, read N- to C-terminus: 3-isopropylmalate dehydratase large subunit (477 aa).

[4Fe-4S] cluster is bound by residues Cys-352, Cys-413, and Cys-416.

Belongs to the aconitase/IPM isomerase family. LeuC type 1 subfamily. As to quaternary structure, heterodimer of LeuC and LeuD. [4Fe-4S] cluster serves as cofactor.

It catalyses the reaction (2R,3S)-3-isopropylmalate = (2S)-2-isopropylmalate. Its pathway is amino-acid biosynthesis; L-leucine biosynthesis; L-leucine from 3-methyl-2-oxobutanoate: step 2/4. In terms of biological role, catalyzes the isomerization between 2-isopropylmalate and 3-isopropylmalate, via the formation of 2-isopropylmaleate. In Pseudomonas putida (strain GB-1), this protein is 3-isopropylmalate dehydratase large subunit.